Reading from the N-terminus, the 251-residue chain is uncharacterized protein (251 aa).

Positions 1–25 (MSAGRLNKKSLGIVMLLSVGLLLAG) are cleaved as a signal peptide. The N-palmitoyl cysteine moiety is linked to residue Cys26. Cys26 carries the S-diacylglycerol cysteine lipid modification. Residues 40–84 (SVYTVKRGDTLYRISRTTGTSVKELARLNGISPPYTIEVGQKLKL) enclose the LysM domain. The segment covering 93–112 (TRKSTAKSTTKTASVTPSSA) has biased composition (low complexity). Residues 93-115 (TRKSTAKSTTKTASVTPSSAVPK) are disordered.

It belongs to the peptidase M23B family.

The protein resides in the cell inner membrane. This is an uncharacterized protein from Escherichia coli (strain K12).